The sequence spans 340 residues: Phosphoribosylformylglycinamidine cyclo-ligase (340 aa).

It belongs to the AIR synthase family.

It localises to the cytoplasm. The catalysed reaction is 2-formamido-N(1)-(5-O-phospho-beta-D-ribosyl)acetamidine + ATP = 5-amino-1-(5-phospho-beta-D-ribosyl)imidazole + ADP + phosphate + H(+). Its pathway is purine metabolism; IMP biosynthesis via de novo pathway; 5-amino-1-(5-phospho-D-ribosyl)imidazole from N(2)-formyl-N(1)-(5-phospho-D-ribosyl)glycinamide: step 2/2. This Streptococcus pneumoniae (strain P1031) protein is Phosphoribosylformylglycinamidine cyclo-ligase.